We begin with the raw amino-acid sequence, 185 residues long: Peptidyl-tRNA hydrolase (185 aa).

Residue tyrosine 14 participates in tRNA binding. The active-site Proton acceptor is the histidine 19. 3 residues coordinate tRNA: phenylalanine 64, asparagine 66, and asparagine 112.

It belongs to the PTH family. In terms of assembly, monomer.

The protein resides in the cytoplasm. The enzyme catalyses an N-acyl-L-alpha-aminoacyl-tRNA + H2O = an N-acyl-L-amino acid + a tRNA + H(+). Its function is as follows. Hydrolyzes ribosome-free peptidyl-tRNAs (with 1 or more amino acids incorporated), which drop off the ribosome during protein synthesis, or as a result of ribosome stalling. Functionally, catalyzes the release of premature peptidyl moieties from peptidyl-tRNA molecules trapped in stalled 50S ribosomal subunits, and thus maintains levels of free tRNAs and 50S ribosomes. The chain is Peptidyl-tRNA hydrolase from Caldanaerobacter subterraneus subsp. tengcongensis (strain DSM 15242 / JCM 11007 / NBRC 100824 / MB4) (Thermoanaerobacter tengcongensis).